The primary structure comprises 297 residues: Protoheme IX farnesyltransferase 1 (297 aa).

9 helical membrane passes run 23 to 43 (VVVL…RAGV), 45 to 65 (WSVL…AAVV), 93 to 113 (LPAL…LLVF), 117 to 137 (LTAW…TGFL), 145 to 165 (IVIG…AVSG), 171 to 191 (PLLL…ALAI), 216 to 236 (LHIL…YAIH), 241 to 261 (LYLA…WVLY), and 277 to 297 (IGYL…LLSL).

This sequence belongs to the UbiA prenyltransferase family. Protoheme IX farnesyltransferase subfamily.

It is found in the cell inner membrane. It carries out the reaction heme b + (2E,6E)-farnesyl diphosphate + H2O = Fe(II)-heme o + diphosphate. It functions in the pathway porphyrin-containing compound metabolism; heme O biosynthesis; heme O from protoheme: step 1/1. Its function is as follows. Converts heme B (protoheme IX) to heme O by substitution of the vinyl group on carbon 2 of heme B porphyrin ring with a hydroxyethyl farnesyl side group. The protein is Protoheme IX farnesyltransferase 1 of Pseudomonas putida (strain ATCC 700007 / DSM 6899 / JCM 31910 / BCRC 17059 / LMG 24140 / F1).